Here is a 235-residue protein sequence, read N- to C-terminus: Small ribosomal subunit protein uS3 (235 aa).

One can recognise a KH type-2 domain in the interval 39-107 (VRKFLNKELA…PAQINIAEVK (69 aa)). Residues 215–235 (AQPEQQPADKPKKAPRGKGRK) are disordered.

This sequence belongs to the universal ribosomal protein uS3 family. As to quaternary structure, part of the 30S ribosomal subunit. Forms a tight complex with proteins S10 and S14.

In terms of biological role, binds the lower part of the 30S subunit head. Binds mRNA in the 70S ribosome, positioning it for translation. The protein is Small ribosomal subunit protein uS3 of Pasteurella multocida (strain Pm70).